We begin with the raw amino-acid sequence, 101 residues long: Protein translation factor SUI1 homolog (101 aa).

This sequence belongs to the SUI1 family.

The sequence is that of Protein translation factor SUI1 homolog from Methanothermobacter thermautotrophicus (strain ATCC 29096 / DSM 1053 / JCM 10044 / NBRC 100330 / Delta H) (Methanobacterium thermoautotrophicum).